The chain runs to 1094 residues: Transport and Golgi organization protein 6 homolog (1094 aa).

The helical transmembrane segment at 468–488 threads the bilayer; that stretch reads LTVLMDSLLPVLGVLFLLYCF. Position 556 is a phosphoserine (Ser556). Basic and acidic residues predominate over residues 777-795; the sequence is EEQQQTSHERPTDVAHSHL. The segment at 777-834 is disordered; that stretch reads EEQQQTSHERPTDVAHSHLEQQQSHETAPQTGLQSNAPIIPQGVNEPSTTTSQKSGSV. Composition is skewed to polar residues over residues 796–813 and 821–834; these read EQQQ…QSNA and NEPS…SGSV. HEAT repeat units follow at residues 873–909 and 952–988; these read LEMQ…SDVY and SKYR…CQRL.

This sequence belongs to the Tango6 family.

Its subcellular location is the membrane. In Homo sapiens (Human), this protein is Transport and Golgi organization protein 6 homolog (TANGO6).